Consider the following 404-residue polypeptide: Tryptophan synthase beta chain (404 aa).

Lys-94 carries the N6-(pyridoxal phosphate)lysine modification.

This sequence belongs to the TrpB family. Tetramer of two alpha and two beta chains. The cofactor is pyridoxal 5'-phosphate.

The enzyme catalyses (1S,2R)-1-C-(indol-3-yl)glycerol 3-phosphate + L-serine = D-glyceraldehyde 3-phosphate + L-tryptophan + H2O. Its pathway is amino-acid biosynthesis; L-tryptophan biosynthesis; L-tryptophan from chorismate: step 5/5. Its function is as follows. The beta subunit is responsible for the synthesis of L-tryptophan from indole and L-serine. The polypeptide is Tryptophan synthase beta chain (Staphylococcus aureus (strain MRSA252)).